The primary structure comprises 309 residues: Phytoene synthase (309 aa).

It belongs to the phytoene/squalene synthase family. ATP serves as cofactor. The cofactor is Mn(2+). Mg(2+) is required as a cofactor.

The protein operates within carotenoid biosynthesis; phytoene biosynthesis. Functionally, involved in the biosynthesis of carotenoids. Catalyzes the condensation of two molecules of geranylgeranyl diphosphate (GGPP) to give prephytoene diphosphate (PPPP) and the subsequent rearrangement of the cyclopropylcarbinyl intermediate to yield phytoene. The chain is Phytoene synthase (crtB) from Pseudescherichia vulneris (Escherichia vulneris).